The following is a 148-amino-acid chain: Large ribosomal subunit protein uL15 (148 aa).

The segment covering 1–30 (MSTHKKKTRKLRGHVSHGHGRIGKHRKHPG) has biased composition (basic residues). Positions 1 to 37 (MSTHKKKTRKLRGHVSHGHGRIGKHRKHPGGRGNAGG) are disordered.

It belongs to the universal ribosomal protein uL15 family.

The polypeptide is Large ribosomal subunit protein uL15 (RpL27A) (Tenebrio molitor (Yellow mealworm beetle)).